The following is a 197-amino-acid chain: Inner membrane protein RclC (197 aa).

The Periplasmic portion of the chain corresponds to 1–15 (MEKYLHLLSRGDKIG). A helical membrane pass occupies residues 16–36 (LTLIRLSIAIVFMWIGLLKFV). At 37 to 85 (PYEADSITPFVANSPLMSFFYEHPEDYKQYLTHEGEYKPEARAWQTANN) the chain is on the cytoplasmic side. A helical membrane pass occupies residues 86-106 (TYGFSNGLGVVEVIIALLVLA). The Periplasmic portion of the chain corresponds to 107–112 (NPVNRW). The helical transmembrane segment at 113–133 (LGLLGGLMAFTTPLVTLSFLI) threads the bilayer. The Cytoplasmic segment spans residues 134–197 (TTPEAWVPAL…ESSSTLKTEY (64 aa)).

Its subcellular location is the cell inner membrane. Probably involved in reactive chlorine species (RCS) stress resistance. This chain is Inner membrane protein RclC (rclC), found in Escherichia coli (strain K12).